A 527-amino-acid polypeptide reads, in one-letter code: Phosphoenolpyruvate carboxykinase (ATP) (527 aa).

The substrate site is built by Arg-54, Tyr-190, and Lys-196. Residues Lys-196, His-215, and 231–239 (GLSGTGKTT) contribute to the ATP site. Lys-196 and His-215 together coordinate Mn(2+). Asp-252 contacts Mn(2+). ATP-binding positions include Glu-280, Arg-317, 436–437 (RI), and Thr-442. Residue Arg-317 participates in substrate binding.

It belongs to the phosphoenolpyruvate carboxykinase (ATP) family. Mn(2+) is required as a cofactor.

The protein localises to the cytoplasm. It carries out the reaction oxaloacetate + ATP = phosphoenolpyruvate + ADP + CO2. Its pathway is carbohydrate biosynthesis; gluconeogenesis. In terms of biological role, involved in the gluconeogenesis. Catalyzes the conversion of oxaloacetate (OAA) to phosphoenolpyruvate (PEP) through direct phosphoryl transfer between the nucleoside triphosphate and OAA. The chain is Phosphoenolpyruvate carboxykinase (ATP) from Oceanobacillus iheyensis (strain DSM 14371 / CIP 107618 / JCM 11309 / KCTC 3954 / HTE831).